The following is a 337-amino-acid chain: Protein-arginine kinase (337 aa).

The region spanning 8–239 (VVLSSRIRLA…KQIISSERRA (232 aa)) is the Phosphagen kinase C-terminal domain. ATP contacts are provided by residues 11–15 (SSRIR), His76, Arg110, 161–165 (RASVM), and 192–197 (RGIYGE). The RDXXRA motif of the pArg binding pocket involved in allosteric regulation signature appears at 321 to 326 (RDVKRA).

This sequence belongs to the ATP:guanido phosphotransferase family.

It catalyses the reaction L-arginyl-[protein] + ATP = N(omega)-phospho-L-arginyl-[protein] + ADP + H(+). Its activity is regulated as follows. Appears to be allosterically activated by the binding of pArg-containing polypeptides to the pArg-binding pocket localized in the C-terminal domain of McsB. Catalyzes the specific phosphorylation of arginine residues in proteins. This is Protein-arginine kinase from Caldanaerobacter subterraneus subsp. tengcongensis (strain DSM 15242 / JCM 11007 / NBRC 100824 / MB4) (Thermoanaerobacter tengcongensis).